Here is a 213-residue protein sequence, read N- to C-terminus: Thiamine-phosphate synthase (213 aa).

4-amino-2-methyl-5-(diphosphooxymethyl)pyrimidine contacts are provided by residues 38–42 (QLREK) and Asn-73. Residues Asp-74 and Asp-93 each contribute to the Mg(2+) site. Residue Ser-111 coordinates 4-amino-2-methyl-5-(diphosphooxymethyl)pyrimidine. Residue 137–139 (TTS) participates in 2-[(2R,5Z)-2-carboxy-4-methylthiazol-5(2H)-ylidene]ethyl phosphate binding. Position 140 (Lys-140) interacts with 4-amino-2-methyl-5-(diphosphooxymethyl)pyrimidine. 2-[(2R,5Z)-2-carboxy-4-methylthiazol-5(2H)-ylidene]ethyl phosphate-binding positions include Gly-169 and 189–190 (IS).

Belongs to the thiamine-phosphate synthase family. Mg(2+) is required as a cofactor.

The enzyme catalyses 2-[(2R,5Z)-2-carboxy-4-methylthiazol-5(2H)-ylidene]ethyl phosphate + 4-amino-2-methyl-5-(diphosphooxymethyl)pyrimidine + 2 H(+) = thiamine phosphate + CO2 + diphosphate. It carries out the reaction 2-(2-carboxy-4-methylthiazol-5-yl)ethyl phosphate + 4-amino-2-methyl-5-(diphosphooxymethyl)pyrimidine + 2 H(+) = thiamine phosphate + CO2 + diphosphate. It catalyses the reaction 4-methyl-5-(2-phosphooxyethyl)-thiazole + 4-amino-2-methyl-5-(diphosphooxymethyl)pyrimidine + H(+) = thiamine phosphate + diphosphate. It participates in cofactor biosynthesis; thiamine diphosphate biosynthesis; thiamine phosphate from 4-amino-2-methyl-5-diphosphomethylpyrimidine and 4-methyl-5-(2-phosphoethyl)-thiazole: step 1/1. Its function is as follows. Condenses 4-methyl-5-(beta-hydroxyethyl)thiazole monophosphate (THZ-P) and 2-methyl-4-amino-5-hydroxymethyl pyrimidine pyrophosphate (HMP-PP) to form thiamine monophosphate (TMP). This chain is Thiamine-phosphate synthase, found in Lysinibacillus sphaericus (strain C3-41).